The following is a 465-amino-acid chain: MQHFFTTFSTEGSKISLEALLNAREERAILQQQLITQYGQTLLCITLTAMGGVKKNALLDYVFTKALENLTALFTQLNITAVKEIIRPLETGHEAYFVLPIDARTLKVLMIELEESIPLARLWDLDVFNAKGNLLSRTDFDLSPRTCLVCGENAKICARTHKHEIDEIVDKIQSLAQNHDFAEHIGEQVYLALIQEARLSPKPGLVDAINNGSHKDMNLHTFEQSAISLKPFFTQFVLKGMMTAHLSENQILSEIRPLGLLAEKAMFKVTDGVNTHKGAIFSFGLVCTAIGRLLAQKSLVQSAVDFDVKLICSLVAQFTQGLTDELKNYPEHLPSTAGVRLFQKYGLTGVRGEAENGFNLIQTLLPQFDEYHQLEWEHRLLILLLNLMAINSDTNVVHRGGLAGLYFIQQTAQDLLTDQHLVTDKTALTQALMKFDTACIERNLSSGGSADLLALTIFFLSFRGN.

An apo-citrate lyase phosphoribosyl-dephospho-CoA transferase region spans residues 1 to 182 (MQHFFTTFST…QSLAQNHDFA (182 aa)). Positions 183–465 (EHIGEQVYLA…TIFFLSFRGN (283 aa)) are 2-(5''-triphosphoribosyl)-3'-dephosphocoenzyme-A synthase.

This sequence in the N-terminal section; belongs to the CitX family. In the C-terminal section; belongs to the CitG/MdcB family.

The enzyme catalyses apo-[citrate lyase ACP] + 2'-(5''-triphospho-alpha-D-ribosyl)-3'-dephospho-CoA = holo-[citrate lyase ACP] + diphosphate. It carries out the reaction 3'-dephospho-CoA + ATP = 2'-(5''-triphospho-alpha-D-ribosyl)-3'-dephospho-CoA + adenine. Functionally, bifunctional enzyme that catalyzes formation of 2-(5''-triphosphoribosyl)-3'-dephosphocoenzyme-A, and then the transfer of this prosthetic group precursor to the apo-acyl carrier protein (gamma chain) of the citrate lyase to yield the holo-acyl carrier protein. The protein is Protein CitXG (citXG) of Haemophilus influenzae (strain ATCC 51907 / DSM 11121 / KW20 / Rd).